Consider the following 3574-residue polypeptide: Chromatin structure-remodeling complex protein SYD (3574 aa).

Disordered stretches follow at residues Ser-76–Asn-105, Thr-123–Asp-211, and Asp-328–Ser-372. 2 stretches are compositionally biased toward polar residues: residues Ser-124–Arg-148 and Pro-155–His-168. A compositionally biased stretch (basic and acidic residues) spans Asn-169–Ser-181. Over residues Trp-194 to Phe-204 the composition is skewed to polar residues. A compositionally biased stretch (basic and acidic residues) spans Arg-358–Ser-372. Residues Gln-573–Ile-647 form the HSA domain. The 168-residue stretch at Val-766–Asn-933 folds into the Helicase ATP-binding domain. Asp-779–Thr-786 serves as a coordination point for ATP. The DEAH box motif lies at Asp-884–His-887. Residues Met-1077–Thr-1223 enclose the Helicase C-terminal domain. The short motif at Ala-1266–Asp-1273 is the Nuclear localization signal element. Disordered regions lie at residues Lys-1342–Thr-1472, His-1500–Glu-1575, Ile-1588–His-1637, Gly-1690–Val-1811, Gln-1830–Asp-1868, Ser-2040–Asn-2068, Ser-2089–Val-2115, Ser-2143–Ile-2162, Leu-2179–Asp-2220, Glu-2235–Asp-2338, Glu-2350–Asp-2451, Phe-2517–Glu-2538, Ser-2684–Asp-2703, Ile-2718–Arg-2759, Asp-2865–Leu-2884, Glu-3017–Ser-3045, Asn-3189–Lys-3208, Val-3316–Met-3337, and Thr-3512–Val-3574. Residues Ala-1362–Lys-1371 show a composition bias toward basic and acidic residues. Polar residues-rich tracts occupy residues Ser-1399–Thr-1426 and His-1500–Asp-1511. Residues Gly-1532–Gly-1546 are compositionally biased toward basic residues. 2 stretches are compositionally biased toward polar residues: residues Gly-1555–Ala-1571 and Glu-1597–Thr-1614. A compositionally biased stretch (basic and acidic residues) spans Arg-1617–Asp-1627. 6 stretches are compositionally biased toward polar residues: residues Gly-1690–Ser-1699, Lys-1706–Glu-1752, Asp-1796–Thr-1806, His-1832–Gln-1849, Ser-2040–Ala-2057, and Ser-2090–Ser-2110. Residues Asp-2248–Val-2260 show a composition bias toward acidic residues. The span at Asp-2438 to Asp-2451 shows a compositional bias: basic and acidic residues. A compositionally biased stretch (polar residues) spans Ile-2718–Gln-2735. Polar residues-rich tracts occupy residues Lys-3034–Ser-3045 and Asp-3191–Ser-3204. Residues Lys-3523–Gly-3538 show a composition bias toward basic and acidic residues.

Belongs to the SNF2/RAD54 helicase family. As to quaternary structure, interacts with LFY. Binds to BARD1/ROW1. Post-translationally, phosphorylated. Mostly expressed in rapidly dividing cells in the vegetative, inflorescence, and root meristems, as well as in young leaf and flower primordia. Isoform 1 is predominantly found in seedlings whereas isoform 2 is present in both seedlings and inflorescences (at protein level).

The protein localises to the cytoplasm. It localises to the nucleus. Functionally, catalytic component of the chromatin structure-remodeling complex (RSC), which is involved in transcription regulation and nucleosome positioning. Controls stem cell fate via the transcription regulation of WUS in the shoot apical meristem, by modulating its promoter. LFY-dependent repressor of the meristem identity switch from vegetative to reproductive development probably by modulating chromatin state. Involved in the regulation of floral homeotic gene expression in response to environmental stimuli. Required for carpel and ovule development, and for cotyledon separation via the regulation of CUC2 transcription. Regulates the promoters of several genes downstream of the jasmonate (JA) and ethylene (ET) signaling pathways. Required for resistance against the necrotrophic pathogen B.cinerea but not the biotrophic pathogen P.syringae. The protein is Chromatin structure-remodeling complex protein SYD (SYD) of Arabidopsis thaliana (Mouse-ear cress).